The primary structure comprises 93 residues: MAKSKNHSTHHKNRKDHRNGIKKAVVHKKTSSKGVELGFARNQRYARIGTEIKRYVRGDMQEVKAHKNPRQPLKTIVAAAKAKLAAKKAAAKK.

Residues 1–31 (MAKSKNHSTHHKNRKDHRNGIKKAVVHKKTS) show a composition bias toward basic residues. Residues 1–33 (MAKSKNHSTHHKNRKDHRNGIKKAVVHKKTSSK) are disordered.

This sequence belongs to the eukaryotic ribosomal protein eL29 family.

This chain is Large ribosomal subunit protein eL29 (rpl29), found in Dictyostelium discoideum (Social amoeba).